A 459-amino-acid polypeptide reads, in one-letter code: MTILGTTFGMVFSLLQVVSGESGYAQNGDLEDAELDDYSFSCYSQLEVNGSQHSLTCAFEDPDVNITNLEFEICGALVEVKCLNFRKLQEIYFIETKKFLLIGKSNICVKVGEKSLTCKKIDLTTIVKPEAPFDLSVVYREGANDFVVTFNTSHLQKKYVKVLMHDVAYRQEKDENKWTHVNLSSTKLTLLQRKLQPAAMYEIKVRSIPDHYFKGFWSEWSPSYYFRTPEINNSSGEMDPILLTISILSFFSVALLVILACVLWKKRIKPIVWPSLPDHKKTLEHLCKKPRKNLNVSFNPESFLDCQIHRVDDIQARDEVEGFLQDTFPQQLEESEKQRLGGDVQSPNCPSEDVVITPESFGRDSSLTCLAGNVSACDAPILSSSRSLDCRESGKNGPHVYQDLLLSLGTTNSTLPPPFSLQSGILTLNPVAQGQPILTSLGSNQEEAYVTMSSFYQNQ.

Positions 1-20 (MTILGTTFGMVFSLLQVVSG) are cleaved as a signal peptide. Over 21–239 (ESGYAQNGDL…EINNSSGEMD (219 aa)) the chain is Extracellular. Cysteine 42 and cysteine 57 are joined by a disulfide. N-linked (GlcNAc...) asparagine glycosylation is found at asparagine 49 and asparagine 65. Intrachain disulfides connect cysteine 74-cysteine 82 and cysteine 108-cysteine 118. The Fibronectin type-III domain maps to 131–231 (APFDLSVVYR…PSYYFRTPEI (101 aa)). 2 N-linked (GlcNAc...) asparagine glycosylation sites follow: asparagine 151 and asparagine 182. The short motif at 217-221 (WSEWS) is the WSXWS motif element. N-linked (GlcNAc...) asparagine glycans are attached at residues asparagine 232 and asparagine 233. A helical membrane pass occupies residues 240–264 (PILLTISILSFFSVALLVILACVLW). Over 265–459 (KKRIKPIVWP…VTMSSFYQNQ (195 aa)) the chain is Cytoplasmic. The Box 1 motif motif lies at 272-280 (VWPSLPDHK). Threonine 282 carries the phosphothreonine; by PKC modification.

Belongs to the type I cytokine receptor family. Type 4 subfamily. As to quaternary structure, the IL7 receptor is a heterodimer of IL7R and IL2RG. The TSLP receptor is a heterodimer of CRLF2 and IL7R. Interacts with CD53. Post-translationally, N-glycosylated IL-7Ralpha binds IL7 300-fold more tightly than the unglycosylated form. Ubiquitinated by MARCHF8; leading to lysosomal degradation.

Its subcellular location is the cell membrane. It localises to the secreted. In terms of biological role, receptor for interleukin-7. Also acts as a receptor for thymic stromal lymphopoietin (TSLP). The sequence is that of Interleukin-7 receptor subunit alpha (IL7R) from Homo sapiens (Human).